We begin with the raw amino-acid sequence, 397 residues long: P2X purinoceptor 3 (397 aa).

At 1–20 (MNCISDFFTYETTKSVVVKS) the chain is on the cytoplasmic side. The helical transmembrane segment at 21 to 43 (WTIGIINRVVQLLIISYFVGWVF) threads the bilayer. The Extracellular portion of the chain corresponds to 44–322 (LHEKAYQVRD…AGKFNIIPTI (279 aa)). 2 residues coordinate ATP: Lys-63 and Lys-65. Disulfide bonds link Cys-107–Cys-153, Cys-116–Cys-137, and Cys-122–Cys-147. Glu-111 contributes to the Mg(2+) binding site. A glycan (N-linked (GlcNAc...) asparagine) is linked at Asn-139. Residue Asp-158 participates in Mg(2+) binding. Residue Asp-158 coordinates Ca(2+). N-linked (GlcNAc...) asparagine glycosylation occurs at Asn-170. Thr-172 lines the ATP pocket. Asn-194 is a glycosylation site (N-linked (GlcNAc...) asparagine). Disulfide bonds link Cys-203–Cys-213 and Cys-247–Cys-256. ATP contacts are provided by Ser-275, Asn-279, and Arg-281. An N-linked (GlcNAc...) asparagine glycan is attached at Asn-290. Lys-299 is a binding site for ATP. Residues 323 to 341 (ISSVAAFTSVGVGTVLCDI) traverse the membrane as a helical segment. The Cytoplasmic portion of the chain corresponds to 342-397 (ILLNFLKGADQYKAKKFEEVNETTLKIAALTNPVYPSDQTTAEKQSTDSGAFSIGH). Positions 378–391 (SDQTTAEKQSTDSG) are enriched in polar residues. Residues 378-397 (SDQTTAEKQSTDSGAFSIGH) form a disordered region.

This sequence belongs to the P2X receptor family. Homotrimer. Forms heterotrimer with P2RX2. Heterotrimeric P2RX2/3 has a ligand dose-response profile that is distinct from either homotrimeric P2RX2 or P2RX3.

The protein localises to the cell membrane. The enzyme catalyses Ca(2+)(in) = Ca(2+)(out). The catalysed reaction is Na(+)(in) = Na(+)(out). Its activity is regulated as follows. Has high sensitivity to ATP. Fast activation by external ATP. Exhibits rapid desensitization. Sensitives to the ATP agonist:alpha/beta-methylene-ATP. Subject to allosteric inhibition by AF-219. Mg(2+) and Ca(2+) slow deactivation of P2RX3. In terms of biological role, extracellular ATP-activated non-selective cation channel. Plays particularly important role in sensory neurons where its activation is critical for gustatory, nociceptive responses, visceral reflexes and sensory hypersensitization. The sequence is that of P2X purinoceptor 3 (P2RX3) from Homo sapiens (Human).